The sequence spans 85 residues: Cell division topological specificity factor (85 aa).

The protein belongs to the MinE family.

In terms of biological role, prevents the cell division inhibition by proteins MinC and MinD at internal division sites while permitting inhibition at polar sites. This ensures cell division at the proper site by restricting the formation of a division septum at the midpoint of the long axis of the cell. This is Cell division topological specificity factor from Shewanella oneidensis (strain ATCC 700550 / JCM 31522 / CIP 106686 / LMG 19005 / NCIMB 14063 / MR-1).